The sequence spans 255 residues: SLA class II histocompatibility antigen, DQ haplotype D alpha chain (255 aa).

The first 23 residues, 1-23 (MVPGRVLMWGALALTAVMSACGG), serve as a signal peptide directing secretion. The alpha-1 stretch occupies residues 24 to 120 (EDIAADHVAS…QVPEVTVFPK (97 aa)). Residues 24–217 (EDIAADHVAS…IPAPMSELTE (194 aa)) lie on the Extracellular side of the membrane. N-linked (GlcNAc...) asparagine glycosylation is found at N104 and N144. One can recognise an Ig-like C1-type domain in the interval 113-205 (PEVTVFPKSP…LDKPLLKHWE (93 aa)). The segment at 121 to 204 (SPVMLGQPNT…GLDKPLLKHW (84 aa)) is alpha-2. A disulfide bond links C133 and C189. Residues 205 to 217 (EPEIPAPMSELTE) are connecting peptide. A helical transmembrane segment spans residues 218–240 (TVVCALGLIVGLVGIVVGTVFII). Residues 241–255 (QGLRSGGPSRHQGSL) are Cytoplasmic-facing.

This sequence belongs to the MHC class II family.

It localises to the membrane. This Sus scrofa (Pig) protein is SLA class II histocompatibility antigen, DQ haplotype D alpha chain.